Consider the following 702-residue polypeptide: Phosphatase and actin regulator 4 (702 aa).

3 disordered regions span residues 1–37 (MEDPFEEADQPTTEPGMVLDSVEAGDTTPPTKRKSKF), 72–194 (RKPR…SSGG), and 222–363 (NLSV…PFPA). An RPEL 1 repeat occupies 63–88 (EVLERKISMRKPREELVKRGVLLEDP). Positions 72–84 (RKPREELVKRGVL) are enriched in basic and acidic residues. Residues 106 to 120 (GHTTPIGNARSSSPV) show a composition bias toward polar residues. 4 positions are modified to phosphoserine: serine 116, serine 118, serine 131, and serine 147. The span at 147–156 (STGSQPNSEA) shows a compositional bias: polar residues. Over residues 163-173 (VPKPPLLPPKR) the composition is skewed to pro residues. The segment covering 233–250 (TLPAAPASTNTTATPSLT) has biased composition (low complexity). Serine 270 and serine 291 each carry phosphoserine. A compositionally biased stretch (polar residues) spans 301-318 (PSTSVPTLESAAAITTKT). Residues serine 342 and serine 344 each carry the phosphoserine modification. Positions 342–362 (SPSPPLPTHIPPEPPRTPPFP) are enriched in pro residues. Position 358 is a phosphothreonine (threonine 358). Serine 427 carries the post-translational modification Phosphoserine. Position 432 is a phosphothreonine (threonine 432). Residues serine 443, serine 453, and serine 464 each carry the phosphoserine modification. The interval 469 to 536 (IEMLKVPDDE…EEDEDESYQS (68 aa)) is disordered. Residues 484–497 (TCPSTFSEEMTPTS) show a composition bias toward polar residues. The segment covering 508–518 (EEEEKESDSDS) has biased composition (acidic residues). Residues serine 514, serine 516, serine 557, and serine 590 each carry the phosphoserine modification. RPEL repeat units lie at residues 583-608 (NTLIRRLSQRPTPEELEQRNILQPKN) and 621-646 (RRLTRKLSQRPTVAELLARKILRFNE). The tract at residues 592–615 (RPTPEELEQRNILQPKNEADRQAE) is disordered. Position 628 is a phosphoserine (serine 628).

Belongs to the phosphatase and actin regulator family. As to quaternary structure, binds PPP1CA and actin.

It is found in the cytoplasm. It localises to the cell projection. The protein localises to the lamellipodium. Regulator of protein phosphatase 1 (PP1) required for neural tube and optic fissure closure, and enteric neural crest cell (ENCCs) migration during development. Acts as an activator of PP1 by interacting with PPP1CA and preventing phosphorylation of PPP1CA at 'Thr-320'. During neural tube closure, localizes to the ventral neural tube and activates PP1, leading to down-regulate cell proliferation within cranial neural tissue and the neural retina. Also acts as a regulator of migration of enteric neural crest cells (ENCCs) by activating PP1, leading to dephosphorylation and subsequent activation of cofilin (COF1 or COF2) and repression of the integrin signaling through the RHO/ROCK pathway. This Homo sapiens (Human) protein is Phosphatase and actin regulator 4 (PHACTR4).